The sequence spans 829 residues: Translation initiation factor IF-2 (829 aa).

A compositionally biased stretch (basic and acidic residues) spans 128 to 137 (QNAEEEKVEA). The interval 128-157 (QNAEEEKVEASAKTVQNNEDIQPQTSKKKE) is disordered. Residues 140–152 (KTVQNNEDIQPQT) are compositionally biased toward polar residues. The tr-type G domain occupies 327-497 (TRAPVVTVMG…LLIAEMQDLK (171 aa)). The G1 stretch occupies residues 336–343 (GHVDHGKT). 336–343 (GHVDHGKT) contacts GTP. The segment at 361–365 (GITQH) is G2. The interval 383-386 (DTPG) is G3. GTP-binding positions include 383-387 (DTPGH) and 437-440 (NKID). The G4 stretch occupies residues 437-440 (NKID). The tract at residues 473-475 (SAL) is G5.

This sequence belongs to the TRAFAC class translation factor GTPase superfamily. Classic translation factor GTPase family. IF-2 subfamily.

The protein resides in the cytoplasm. In terms of biological role, one of the essential components for the initiation of protein synthesis. Protects formylmethionyl-tRNA from spontaneous hydrolysis and promotes its binding to the 30S ribosomal subunits. Also involved in the hydrolysis of GTP during the formation of the 70S ribosomal complex. This chain is Translation initiation factor IF-2, found in Rickettsia felis (strain ATCC VR-1525 / URRWXCal2) (Rickettsia azadi).